An 826-amino-acid polypeptide reads, in one-letter code: Dolichyl-diphosphooligosaccharide--protein glycosyltransferase subunit STT3B (826 aa).

Positions 1 to 60 (MAEPSAPESKHKSSLNSSPWSGLMALGNSRHGHHGPGAQCAHKAAGGVAPPKPAPAGLSG) are disordered. N-acetylalanine is present on alanine 2. Residues 2-41 (AEPSAPESKHKSSLNSSPWSGLMALGNSRHGHHGPGAQCA) are Cytoplasmic-facing. Residues serine 13, serine 18, and serine 29 each carry the phosphoserine modification. A helical transmembrane segment spans residues 42–86 (HKAAGGVAPPKPAPAGLSGGLSQPAGWQSLLSFTILFLAWLAGFS). Over 87–173 (SRLFAVIRFE…VHIRDVCVFL (87 aa)) the chain is Lumenal. A DXD motif 1 motif is present at residues 101-103 (EFD). Aspartate 103 is a binding site for Mn(2+). A helical membrane pass occupies residues 174–192 (APTFSGLTSISTFLLTREL). Residues 193–194 (WN) lie on the Cytoplasmic side of the membrane. The chain crosses the membrane as a helical span at residues 195–212 (QGAGLLAACFIAIVPGYI). Over 213-223 (SRSVAGSFDNE) the chain is Lumenal. The Mn(2+) site is built by aspartate 221 and glutamate 223. The short motif at 221–223 (DNE) is the DXD motif 2 element. Residues 224 to 243 (GIAIFALQFTYYLWVKSVKT) form a helical membrane-spanning segment. Residues 244-245 (GS) are Cytoplasmic-facing. Residues 246-260 (VFWTMCCCLSYFYMV) form a helical membrane-spanning segment. Residues 261 to 265 (SAWGG) lie on the Lumenal side of the membrane. Residues 266–282 (YVFIINLIPLHVFVLLL) traverse the membrane as a helical segment. The Cytoplasmic portion of the chain corresponds to 283–287 (MQRYS). A helical transmembrane segment spans residues 288-313 (KRVYIAYSTFYIVGLILSMQIPFVGF). Over 314-321 (QPIRTSEH) the chain is Lumenal. The chain crosses the membrane as a helical span at residues 322-341 (MAAAGVFALLQAYAFLQYLR). The Cytoplasmic segment spans residues 342-350 (DRLTKQEFQ). A helical transmembrane segment spans residues 351–371 (TLFFLGVSLAAGAVFLSVIYL). Topologically, residues 372–410 (TYTGYIAPWSGRFYSLWDTGYAKIHIPIIASVSEHQPTT) are lumenal. An SVSE motif motif is present at residues 402–405 (SVSE). A helical transmembrane segment spans residues 411–433 (WVSFFFDLHILVCTFPAGLWFCI). Topologically, residues 434–439 (KNINDE) are cytoplasmic. The helical transmembrane segment at 440–456 (RVFVALYAISAVYFAGV) threads the bilayer. Residues 457 to 460 (MVRL) lie on the Lumenal side of the membrane. Dolichyl diphosphooligosaccharide is bound at residue arginine 459. A helical membrane pass occupies residues 461–482 (MLTLTPVVCMLSAIAFSNVFEH). The Cytoplasmic portion of the chain corresponds to 483-526 (YLGDDMKRENPPVEDSSDEDDKRNPGNLYDKAGKVRKHVTEQEK). The tract at residues 490 to 512 (RENPPVEDSSDEDDKRNPGNLYD) is disordered. 2 positions are modified to phosphoserine: serine 498 and serine 499. Residues 527–552 (TEEGLGPNIKSIVTMLMLMLLMMFAV) traverse the membrane as a helical segment. Topologically, residues 553–826 (HCTWVTSNAY…KGKKISKKTV (274 aa)) are lumenal. Residues 604–606 (WWD) form an interacts with target acceptor peptide in protein substrate region. The WWDYG motif signature appears at 604–608 (WWDYG). Tyrosine 609 contributes to the dolichyl diphosphooligosaccharide binding site. Asparagine 616 and asparagine 623 each carry an N-linked (GlcNAc...) asparagine glycan. The N-linked (GlcNAc...) (high mannose) asparagine glycan is linked to asparagine 627. The N-linked (GlcNAc...) asparagine glycan is linked to asparagine 641. The short motif at 671-678 (DINKFLWM) is the DK motif element.

Belongs to the STT3 family. As to quaternary structure, component of the oligosaccharyltransferase (OST) complex. There are 2 OST complexes, OST-A and OST-B, which contain STT3A or STT3B as catalytic subunit, respectively. OST-A and OST-B contain common core subunits RPN1, RPN2, OST48, OST4, DAD1 and TMEM258, and OST-B contains either MAGT1 or TUSC3 as specific accessory subunit. Requires Mg(2+) as cofactor. Mn(2+) is required as a cofactor.

It is found in the endoplasmic reticulum. The protein resides in the endoplasmic reticulum membrane. The enzyme catalyses a di-trans,poly-cis-dolichyl diphosphooligosaccharide + L-asparaginyl-[protein] = N(4)-(oligosaccharide-(1-&gt;4)-N-acetyl-beta-D-glucosaminyl-(1-&gt;4)-N-acetyl-beta-D-glucosaminyl)-L-asparaginyl-[protein] + a di-trans,poly-cis-dolichyl diphosphate + H(+). The protein operates within protein modification; protein glycosylation. Catalytic subunit of the oligosaccharyl transferase (OST) complex that catalyzes the initial transfer of a defined glycan (Glc(3)Man(9)GlcNAc(2) in eukaryotes) from the lipid carrier dolichol-pyrophosphate to an asparagine residue within an Asn-X-Ser/Thr consensus motif in nascent polypeptide chains, the first step in protein N-glycosylation. N-glycosylation occurs cotranslationally and the complex associates with the Sec61 complex at the channel-forming translocon complex that mediates protein translocation across the endoplasmic reticulum (ER). All subunits are required for a maximal enzyme activity. This subunit contains the active site and the acceptor peptide and donor lipid-linked oligosaccharide (LLO) binding pockets. STT3B is present in a small subset of OST complexes and mediates both cotranslational and post-translational N-glycosylation of target proteins: STT3B-containing complexes are required for efficient post-translational glycosylation and while they are less competent than STT3A-containing complexes for cotranslational glycosylation, they have the ability to mediate glycosylation of some nascent sites that are not accessible for STT3A. STT3B-containing complexes also act post-translationally and mediate modification of skipped glycosylation sites in unfolded proteins. Plays a role in ER-associated degradation (ERAD) pathway that mediates ubiquitin-dependent degradation of misfolded endoplasmic reticulum proteins by mediating N-glycosylation of unfolded proteins, which are then recognized by the ERAD pathway and targeted for degradation. This chain is Dolichyl-diphosphooligosaccharide--protein glycosyltransferase subunit STT3B, found in Canis lupus familiaris (Dog).